Here is a 778-residue protein sequence, read N- to C-terminus: Semaphorin-3ab (778 aa).

The signal sequence occupies residues 1–17 (MDYLWWIVLLIWTLIAP). The region spanning 32 to 515 (RLKPSYKEML…SAIGVSQMPL (484 aa)) is the Sema domain. A glycan (N-linked (GlcNAc...) asparagine) is linked at Asn-54. The cysteines at positions 105 and 116 are disulfide-linked. N-linked (GlcNAc...) asparagine glycosylation occurs at Asn-127. 4 disulfides stabilise this stretch: Cys-134-Cys-143, Cys-270-Cys-382, Cys-294-Cys-342, and Cys-518-Cys-536. One can recognise an Ig-like C2-type domain in the interval 579-668 (GEAGLLDKTV…FIQTLLRLTL (90 aa)). The N-linked (GlcNAc...) asparagine glycan is linked to Asn-593. Cys-652 and Cys-716 form a disulfide bridge. A disordered region spans residues 727–778 (RRQKANLLHASQSHTSQILHSSQSHAKWKLLQENKKGRNRRTHEMQRAPRSV). The span at 735–751 (HASQSHTSQILHSSQSH) shows a compositional bias: polar residues. Basic and acidic residues predominate over residues 756–778 (LLQENKKGRNRRTHEMQRAPRSV).

It belongs to the semaphorin family. As to expression, expressed in rhombomeres three and five, and in the posterior half of newly formed somites which is avoided by ventrally extending motor axons.

The protein resides in the secreted. In terms of biological role, might normally influence the midsegmental pathway choice of the ventrally extending motor axons by contributing to a repulsive domain in the posterior somite. The protein is Semaphorin-3ab (sema3ab) of Danio rerio (Zebrafish).